Consider the following 355-residue polypeptide: Uroporphyrinogen decarboxylase (355 aa).

Residues 27–31 (RQAGR), Phe-46, Asp-78, Tyr-155, Ser-210, and His-328 contribute to the substrate site.

This sequence belongs to the uroporphyrinogen decarboxylase family. In terms of assembly, homodimer.

It is found in the cytoplasm. The catalysed reaction is uroporphyrinogen III + 4 H(+) = coproporphyrinogen III + 4 CO2. Its pathway is porphyrin-containing compound metabolism; protoporphyrin-IX biosynthesis; coproporphyrinogen-III from 5-aminolevulinate: step 4/4. Its function is as follows. Catalyzes the decarboxylation of four acetate groups of uroporphyrinogen-III to yield coproporphyrinogen-III. This is Uroporphyrinogen decarboxylase from Pseudomonas aeruginosa (strain ATCC 15692 / DSM 22644 / CIP 104116 / JCM 14847 / LMG 12228 / 1C / PRS 101 / PAO1).